The sequence spans 252 residues: Chitooligosaccharide deacetylase (252 aa).

Positions 61 and 125 each coordinate Mg(2+).

This sequence belongs to the YdjC deacetylase family. ChbG subfamily. Homodimer. Mg(2+) is required as a cofactor.

It is found in the cytoplasm. The catalysed reaction is N,N'-diacetylchitobiose + H2O = N-acetyl-beta-D-glucosaminyl-(1-&gt;4)-D-glucosamine + acetate. It catalyses the reaction diacetylchitobiose-6'-phosphate + H2O = N'-monoacetylchitobiose-6'-phosphate + acetate. Its pathway is glycan degradation; chitin degradation. Involved in the degradation of chitin. ChbG is essential for growth on the acetylated chitooligosaccharides chitobiose and chitotriose but is dispensable for growth on cellobiose and chitosan dimer, the deacetylated form of chitobiose. Deacetylation of chitobiose-6-P and chitotriose-6-P is necessary for both the activation of the chb promoter by the regulatory protein ChbR and the hydrolysis of phosphorylated beta-glucosides by the phospho-beta-glucosidase ChbF. Catalyzes the removal of only one acetyl group from chitobiose-6-P to yield monoacetylchitobiose-6-P, the inducer of ChbR and the substrate of ChbF. This Escherichia coli O6:K15:H31 (strain 536 / UPEC) protein is Chitooligosaccharide deacetylase.